Consider the following 1226-residue polypeptide: Chromosome partition protein Smc (1226 aa).

Residue 32–39 (PNGCGKSN) coordinates ATP. Coiled-coil stretches lie at residues 173 to 231 (ITKF…IKRN) and 269 to 491 (NSLE…SKSL). Residues 527–635 (YQLLGNLIQC…FDGYFIASKF (109 aa)) form the SMC hinge domain. Coiled-coil stretches lie at residues 679–741 (QGVV…AAKK), 775–965 (MLES…LREA), and 1006–1078 (HRRY…KSKE).

The protein belongs to the SMC family. Homodimer.

The protein resides in the cytoplasm. Functionally, required for chromosome condensation and partitioning. The chain is Chromosome partition protein Smc from Halobacteriovorax marinus (strain ATCC BAA-682 / DSM 15412 / SJ) (Bacteriovorax marinus).